A 1233-amino-acid polypeptide reads, in one-letter code: NACHT, LRR and PYD domains-containing protein 1b allele 1 (1233 aa).

The segment at 1-22 (MEESPPKQKSNTKVAQHEGQQD) is disordered. Residues 126–435 (QLVIIEGAAG…EFFAAISCIL (310 aa)) form the NACHT domain. 132–139 (GAAGIGKS) lines the ATP pocket. LRR repeat units lie at residues 627–647 (NLEG…QSLC) and 684–704 (SLTE…RMLC). A ZU5 region spans residues 850–983 (FWGPIGPVAT…GYTVLKNPSF (134 aa)). In terms of domain architecture, FIIND spans 850–1133 (FWGPIGPVAT…LRPALPRIAQ (284 aa)). The segment at 984–1133 (SPMGVVLRII…LRPALPRIAQ (150 aa)) is UPA. Residues 1143–1226 (HFMDQHREQL…HLVMDLLEKS (84 aa)) enclose the CARD domain.

It belongs to the NLRP family. As to quaternary structure, interacts with DPP9; leading to inhibit activation of the inflammasome. DPP9 acts via formation of a ternary complex, composed of a DPP9 homodimer, one full-length Nlrp1b protein, and one cleaved C-terminus of Nlrp1b (NACHT, LRR and PYD domains-containing protein 1b, C-terminus). Interacts with DPP8; leading to inhibit activation of the inflammasome, probably via formation of a ternary complex with DPP8. Interacts (via LRR repeats) with BCL2 and BCL2L1 (via the loop between motifs BH4 and BH3). Interacts with NOD2; this interaction may increase IL1B release. Interacts with EIF2AK2/PKR; this interaction requires EIF2AK2 activity, is accompanied by EIF2AK2 autophosphorylation and promotes inflammasome assembly in response to B.anthracis lethal toxin. Interacts with MEFV; this interaction targets Nlrp1b to degradation by autophagy, hence preventing excessive IL1B- and IL18-mediated inflammation. In terms of assembly, interacts with the C-terminal part of Nlrp1b (NACHT, LRR and PYD domains-containing protein 1b, C-terminus) in absence of pathogens and other damage-associated signals. Interacts with the N-terminal part of Nlrp1b (NACHT, LRR and PYD domains-containing protein 1b, N-terminus) in absence of pathogens and other damage-associated signals. Homomultimer; forms the Nlrp1b inflammasome polymeric complex, a filament composed of homopolymers of this form in response to pathogens and other damage-associated signals. The Nlrp1b inflammasome polymeric complex directly recruits pro-caspase-1 (proCASP1) independently of PYCARD/ASC. Interacts (via CARD domain) with CASP1 (via CARD domain); leading to CASP1 activation. Autocatalytically cleaved. Autocatalytic cleavage in FIIND region occurs constitutively, prior to activation signals, and is required for inflammasome activity (IL1B release), possibly by facilitating CASP1 binding. Both N- and C-terminal parts remain associated non-covalently. Post-translationally, ubiquitinated by UBR2, a component of the N-end rule pathway in response to pathogens and other damage-associated signals, leading to its degradation by the proteasome and subsequent release of the cleaved C-terminal part of the protein (NACHT, LRR and PYD domains-containing protein 1b, C-terminus), which polymerizes and forms the Nlrp1b inflammasome. In terms of processing, (Microbial infection) Cleavage by B.anthracis lethal toxin (LT) endopeptidase promotes ubiquitination and degradation of the N-terminal part, releasing the cleaved C-terminal part of the protein (NACHT, LRR and PYD domains-containing protein 1b, C-terminus), which polymerizes and forms the Nlrp1b inflammasome. (Microbial infection) Ubiquitinated by S.flexneri IpaH7.8, leading to its degradation by the proteasome and subsequent release of the cleaved C-terminal part of the protein (NACHT, LRR and PYD domains-containing protein 1b, C-terminus), which polymerizes and forms the Nlrp1b inflammasome. As to expression, widely expressed, including in macrophages.

It is found in the cytoplasm. Its subcellular location is the cytosol. The protein localises to the membrane. It localises to the inflammasome. Activated by cleavage by B.anthracis lethal toxin (LT) endopeptidase: cleavage by LT promotes ubiquitination and degradation of the N-terminal part, releasing the cleaved C-terminal part of the protein (NACHT, LRR and PYD domains-containing protein 1b, C-terminus), which polymerizes and forms the Nlrp1b inflammasome. Activated by S.flexneri IpaH7.8, an E3 ubiquitin ligase that mediates ubiquitination and degradation of the N-terminal part, releasing the cleaved C-terminal part of the protein, which polymerizes and forms the Nlrp1b inflammasome. Nlrp1b inflammasome is inhibited by DPP8 and DPP9, which sequester the C-terminal fragment of Nlrp1b (NACHT, LRR and PYD domains-containing protein 1b, C-terminus) in a ternary complex, thereby preventing Nlrp1b oligomerization and activation. Nlrp1b inflammasome is activated by Val-boroPro (Talabostat, PT-100), an inhibitor of dipeptidyl peptidases DPP8 and DPP9. Val-boroPro relieves inhibition of DPP8 and/or DPP9 by promoting disruption of the ternary complex, releasing its C-terminal part from autoinhibition. Activated by metabolic inhibitors, such as 2-deoxy-D-glucose and sodium azide, by nutrient deprivation and hypoxia, possibly due to a decrease in cytosolic ATP. Also activated by Toxoplasma gondii. Not activated by muramyl dipeptide, nor by full-length bacterial peptidoglycan. Contrary to its human ortholog, not activated by positive-strand RNA virus such as Semliki Forrest virus or long dsRNA. Functionally, acts as the sensor component of the Nlrp1b inflammasome, which mediates inflammasome activation in response to various pathogen-associated signals, leading to subsequent pyroptosis. Inflammasomes are supramolecular complexes that assemble in the cytosol in response to pathogens and other damage-associated signals and play critical roles in innate immunity and inflammation. Acts as a recognition receptor (PRR): recognizes specific pathogens and other damage-associated signals, such as B.anthracis lethal toxin (LT) or Val-boroPro inhibitor, and mediates the formation of the inflammasome polymeric complex. In response to pathogen-associated signals, the N-terminal part of Nlrp1b is degraded by the proteasome, releasing the cleaved C-terminal part of the protein (NACHT, LRR and PYD domains-containing protein 1b, C-terminus), which polymerizes to initiate the formation of the inflammasome complex: the inflammasome directly recruits pro-caspase-1 (proCASP1) independently of PYCARD/ASC and promotes caspase-1 (CASP1) activation, which subsequently cleaves and activates inflammatory cytokines IL1B and IL18 and gasdermin-D (GSDMD), leading to pyroptosis. In the absence of GSDMD expression, the Nlrp1b inflammasome is able to recruit and activate CASP8, leading to activation of gasdermin-E (GSDME). Activation of Nlrp1b inflammasome is also required for HMGB1 secretion; the active cytokines and HMGB1 stimulate inflammatory responses. Primary mediator of macrophage susceptibility to B.anthracis LT: in response to B.anthracis infection, macrophages and dendritic cells release IL1B and undergo pyroptosis. This early inflammatory response to the toxin increases resistance to infection by B.anthracis spores. In terms of biological role, constitutes the precursor of the Nlrp1b inflammasome, which mediates autoproteolytic processing within the FIIND domain to generate the N-terminal and C-terminal parts, which are associated non-covalently in absence of pathogens and other damage-associated signals. Regulatory part that prevents formation of the Nlrp1b inflammasome: in absence of pathogens and other damage-associated signals, interacts with the C-terminal part of Nlrp1b (NACHT, LRR and PYD domains-containing protein 1b, C-terminus), preventing activation of the Nlrp1b inflammasome. In response to pathogen-associated signals, this part is ubiquitinated by the N-end rule pathway and degraded by the proteasome, releasing the cleaved C-terminal part of the protein, which polymerizes and forms the Nlrp1b inflammasome. Its function is as follows. Constitutes the active part of the Nlrp1b inflammasome. In absence of pathogens and other damage-associated signals, interacts with the N-terminal part of Nlrp1b (NACHT, LRR and PYD domains-containing protein 1b, N-terminus), preventing activation of the Nlrp1b inflammasome. In response to pathogen-associated signals, the N-terminal part of Nlrp1b is degraded by the proteasome, releasing this form, which polymerizes to form the Nlrp1b inflammasome complex: the Nlrp1b inflammasome complex then directly recruits pro-caspase-1 (proCASP1) and promotes caspase-1 (CASP1) activation, leading to gasdermin-D (GSDMD) cleavage and subsequent pyroptosis. This is NACHT, LRR and PYD domains-containing protein 1b allele 1 from Mus musculus (Mouse).